The primary structure comprises 264 residues: MKIALGVEYNGKRYFGWQRQEKVLSVQEELEKALSFVANEKIDLFCAGRTDSGVHGTGQVVHFETEVVRPERAWAFGTNANLPDDIAVKWAKTADDEFHARFSATARRYRYLIYTNPLRSAVLPEGVTHCHLPLDHEKMHEAGQFLLGENDFSSFRAAQCQSKTPWRNVHHLQVTRHGRYIVVDIQANAFVHHMVRNIVGSLMEVGSGRQPVEWMKWLLEQRNRKLAAPTAKPQGLYLVRVTYPERFGIPLSPLGPLFLPDELV.

The active-site Nucleophile is D51. Y109 contributes to the substrate binding site.

It belongs to the tRNA pseudouridine synthase TruA family. As to quaternary structure, homodimer.

The catalysed reaction is uridine(38/39/40) in tRNA = pseudouridine(38/39/40) in tRNA. In terms of biological role, formation of pseudouridine at positions 38, 39 and 40 in the anticodon stem and loop of transfer RNAs. This chain is tRNA pseudouridine synthase A, found in Actinobacillus succinogenes (strain ATCC 55618 / DSM 22257 / CCUG 43843 / 130Z).